Consider the following 99-residue polypeptide: Co-chaperonin GroES (99 aa).

The protein belongs to the GroES chaperonin family. As to quaternary structure, heptamer of 7 subunits arranged in a ring. Interacts with the chaperonin GroEL.

Its subcellular location is the cytoplasm. Together with the chaperonin GroEL, plays an essential role in assisting protein folding. The GroEL-GroES system forms a nano-cage that allows encapsulation of the non-native substrate proteins and provides a physical environment optimized to promote and accelerate protein folding. GroES binds to the apical surface of the GroEL ring, thereby capping the opening of the GroEL channel. In Methylacidiphilum infernorum (isolate V4) (Methylokorus infernorum (strain V4)), this protein is Co-chaperonin GroES.